A 118-amino-acid chain; its full sequence is MARVVKIDSAESWNFYVSQAKNQNCPIVAHFTALWCIPSVFMNSFFEELAFNYKDALFLIVDVDEVKEVASQLEVKAMPTFLFLKDGNAMDKLVGANPDEIKKRVDGFVQSSRVVHIA.

Residues 2 to 110 (ARVVKIDSAE…IKKRVDGFVQ (109 aa)) enclose the Thioredoxin domain.

This sequence belongs to the thioredoxin family. Ubiquitous.

It is found in the cytoplasm. In terms of biological role, possesses low disulfide reductase activity, but efficient protein disulfide isomerase activity. Does not possess deglutathionylation activity. This is Thioredoxin-like protein CXXS1 (CXXS1) from Arabidopsis thaliana (Mouse-ear cress).